The sequence spans 159 residues: Large ribosomal subunit protein uL13 (159 aa).

The protein belongs to the universal ribosomal protein uL13 family. In terms of assembly, part of the 50S ribosomal subunit.

Functionally, this protein is one of the early assembly proteins of the 50S ribosomal subunit, although it is not seen to bind rRNA by itself. It is important during the early stages of 50S assembly. This Methanopyrus kandleri (strain AV19 / DSM 6324 / JCM 9639 / NBRC 100938) protein is Large ribosomal subunit protein uL13.